Consider the following 547-residue polypeptide: Methionine--tRNA ligase (547 aa).

A 'HIGH' region motif is present at residues P15 to H25. Positions 146, 149, 159, and 162 each coordinate Zn(2+). The short motif at K332–S336 is the 'KMSKS' region element. K335 is a binding site for ATP.

This sequence belongs to the class-I aminoacyl-tRNA synthetase family. MetG type 1 subfamily. In terms of assembly, monomer. Zn(2+) is required as a cofactor.

The protein resides in the cytoplasm. The enzyme catalyses tRNA(Met) + L-methionine + ATP = L-methionyl-tRNA(Met) + AMP + diphosphate. Is required not only for elongation of protein synthesis but also for the initiation of all mRNA translation through initiator tRNA(fMet) aminoacylation. This is Methionine--tRNA ligase (metG) from Buchnera aphidicola subsp. Acyrthosiphon pisum (strain APS) (Acyrthosiphon pisum symbiotic bacterium).